Here is a 665-residue protein sequence, read N- to C-terminus: Beta-galactosidase LacZ (665 aa).

Arg110 is a binding site for substrate. Cys114 lines the Zn(2+) pocket. Asn148 lines the substrate pocket. Glu149 acts as the Proton donor in catalysis. Zn(2+) contacts are provided by Cys157, Cys159, and Cys162. Glu303 serves as the catalytic Nucleophile. Substrate contacts are provided by residues Trp311 and 351 to 354 (EKFH).

Belongs to the glycosyl hydrolase 42 family.

The enzyme catalyses Hydrolysis of terminal non-reducing beta-D-galactose residues in beta-D-galactosides.. This chain is Beta-galactosidase LacZ, found in Heyndrickxia coagulans (Weizmannia coagulans).